A 445-amino-acid polypeptide reads, in one-letter code: 2-oxoisovalerate dehydrogenase subunit alpha, mitochondrial (445 aa).

The N-terminal 45 residues, 1–45 (MAVAIAAARVWRLNRGLSQAALLLLRRPGARGLARSHPRRQQQQF), are a transit peptide targeting the mitochondrion. The disordered stretch occupies residues 33 to 54 (LARSHPRRQQQQFSSLDDKPQF). Residues tyrosine 158 and arginine 159 each coordinate thiamine diphosphate. Serine 206 lines the K(+) pocket. Residue serine 207 coordinates thiamine diphosphate. K(+) is bound by residues proline 208, threonine 211, and glutamine 212. Glutamate 238 provides a ligand contact to Mg(2+). Thiamine diphosphate contacts are provided by glycine 239, alanine 240, and arginine 265. Residues asparagine 267 and tyrosine 269 each contribute to the Mg(2+) site. Histidine 336 is a thiamine diphosphate binding site. Serine 337 is modified (phosphoserine; by BCKDK). At threonine 338 the chain carries Phosphothreonine. A phosphoserine mark is found at serine 339 and serine 347. Lysine 356 carries the post-translational modification N6-acetyllysine; alternate. Lysine 356 carries the N6-succinyllysine; alternate modification. The residue at position 380 (lysine 380) is an N6-succinyllysine.

It belongs to the BCKDHA family. Heterotetramer of 2 alpha/BCKDHA and 2 beta chains/BCKDHB that forms the branched-chain alpha-keto acid decarboxylase (E1) component of the BCKD complex. The branched-chain alpha-ketoacid dehydrogenase is a large complex composed of three major building blocks E1, E2 and E3. It is organized around E2, a 24-meric cubic core composed of DBT, to which are associated 6 to 12 copies of E1, and approximately 6 copies of the dehydrogenase E3, a DLD dimer. Interacts with PPM1K. Requires thiamine diphosphate as cofactor. The cofactor is Mg(2+). In terms of processing, phosphorylated at Ser-337 by BCKDK and dephosphorylated by protein phosphatase PPM1K.

It is found in the mitochondrion matrix. It carries out the reaction N(6)-[(R)-lipoyl]-L-lysyl-[protein] + 3-methyl-2-oxobutanoate + H(+) = N(6)-[(R)-S(8)-2-methylpropanoyldihydrolipoyl]-L-lysyl-[protein] + CO2. Functionally, together with BCKDHB forms the heterotetrameric E1 subunit of the mitochondrial branched-chain alpha-ketoacid dehydrogenase (BCKD) complex. The BCKD complex catalyzes the multi-step oxidative decarboxylation of alpha-ketoacids derived from the branched-chain amino-acids valine, leucine and isoleucine producing CO2 and acyl-CoA which is subsequently utilized to produce energy. The E1 subunit catalyzes the first step with the decarboxylation of the alpha-ketoacid forming an enzyme-product intermediate. A reductive acylation mediated by the lipoylamide cofactor of E2 extracts the acyl group from the E1 active site for the next step of the reaction. The chain is 2-oxoisovalerate dehydrogenase subunit alpha, mitochondrial (BCKDHA) from Pan troglodytes (Chimpanzee).